We begin with the raw amino-acid sequence, 551 residues long: Vacuolar protein sorting-associated protein 17 (551 aa).

The disordered stretch occupies residues 1 to 100; that stretch reads MTSAVPYDPY…SERVILPERS (100 aa). Composition is skewed to polar residues over residues 29 to 39 and 46 to 64; these read AATTTDGSSSM and TEQT…NIQN. Residues 108-227 enclose the PX domain; it reads LLAKVTGLER…FFIESDFNTY (120 aa). Residues 359–385 adopt a coiled-coil conformation; the sequence is IMRNLVQAQQNSKAKQEQARRFRSRRD. The tract at residues 474–504 is disordered; the sequence is RLGRHAVSNNNSDTSQTLKGDSWTGESNRKS. Polar residues predominate over residues 480–504; it reads VSNNNSDTSQTLKGDSWTGESNRKS. S544 carries the phosphoserine modification.

It belongs to the VPS17 family. As to quaternary structure, component of the retromer complex which consists of VPS29, VPS26, VPS35, VPS5 and VPS17. Component of a retromer subcomplex consisting of VPS5 and VPS17. Phosphorylated on one or more serine residues.

Its subcellular location is the endomembrane system. In terms of biological role, component of the membrane-associated retromer complex which is essential in endosome-to-Golgi retrograde transport. The VPS5-VPS17 subcomplex may assemble onto the membrane to promote vesicle formation and is required for recycling the vacuolar protein-sorting receptor. Required for the sorting and delivery of a subset of soluble vacuolar hydrolases. Required for retention of late Golgi membrane proteins and vacuolar biogenesis. Involved in vacuolar fragmentation during hyperosmotic stress. The sequence is that of Vacuolar protein sorting-associated protein 17 from Saccharomyces cerevisiae (strain ATCC 204508 / S288c) (Baker's yeast).